A 2153-amino-acid polypeptide reads, in one-letter code: RNA-directed RNA polymerase L (2153 aa).

Mn(2+) is bound by residues H36, E54, D97, E110, and V111. K124 serves as the catalytic For endonuclease activity. In terms of domain architecture, RdRp catalytic spans 957-1143; it reads TGKKIRFKRK…AVNQEMWKSM (187 aa). Mg(2+) is bound at residue D1100.

This sequence belongs to the Bunyavirales RNA polymerase family. In terms of assembly, interacts with the viral nucleoprotein. It depends on Mn(2+) as a cofactor. Mg(2+) serves as cofactor.

The protein resides in the host cytoplasm. It is found in the host perinuclear region. The enzyme catalyses RNA(n) + a ribonucleoside 5'-triphosphate = RNA(n+1) + diphosphate. In terms of biological role, RNA-dependent RNA polymerase, which is responsible for the replication and transcription of the viral RNA genome using antigenomic RNA as an intermediate. During transcription, synthesizes subgenomic RNAs and assures their capping by a cap-snatching mechanism, which involves the endonuclease activity cleaving the host capped pre-mRNAs. These short capped RNAs are then used as primers for viral transcription. Cleaves ssRNA substrates but not DNA. Seems to downregulate the expression of its own and heterologous mRNAs through its endonuclease activity. The chain is RNA-directed RNA polymerase L from Black Creek Canal orthohantavirus (BCCV).